Consider the following 299-residue polypeptide: CMRF35-like molecule 8 (299 aa).

The signal sequence occupies residues 1–17 (MWLPWALLLLWVPGCFA). Topologically, residues 18–180 (LSKCRTVAGP…TEEVVNSQLP (163 aa)) are extracellular. Residues 19-123 (SKCRTVAGPV…HDPVVEVEVS (105 aa)) form the Ig-like V-type domain. The cysteines at positions 36 and 103 are disulfide-linked. 2 N-linked (GlcNAc...) asparagine glycosylation sites follow: Asn-83 and Asn-92. The helical transmembrane segment at 181 to 201 (LLLSLLALLLLLLVGASLLAW) threads the bilayer. The Cytoplasmic segment spans residues 202–299 (RMFQKWIKAG…DSDYSVIRKT (98 aa)). A disordered region spans residues 278–299 (RIAAQRPREEEPDSDYSVIRKT). Phosphotyrosine is present on Tyr-293.

The protein belongs to the CD300 family. In terms of assembly, upon tyrosine-phosphorylation, interacts with PTN6/SHP-1 and PTPN11/SHP-2 and INPP5D. Post-translationally, phosphorylated on tyrosine. N-glycosylated. Expressed not only by natural killer (NK) cells but also by T-cell subsets, B-cells, dendritic cells, mast cells, granulocytes and monocytes.

Its subcellular location is the cell membrane. Inhibitory receptor which may contribute to the down-regulation of cytolytic activity in natural killer (NK) cells, and to the down-regulation of mast cell degranulation. Negatively regulates the Toll-like receptor (TLR) signaling mediated by MYD88 but not TRIF through activation of PTPN6. This chain is CMRF35-like molecule 8 (CD300A), found in Homo sapiens (Human).